The primary structure comprises 227 residues: Ribose-5-phosphate isomerase A (227 aa).

Residues 26–29 (TGST), 82–85 (DGAD), and 95–98 (KGGG) contribute to the substrate site. Glutamate 104 serves as the catalytic Proton acceptor. Lysine 122 is a binding site for substrate.

It belongs to the ribose 5-phosphate isomerase family. In terms of assembly, homodimer.

It catalyses the reaction aldehydo-D-ribose 5-phosphate = D-ribulose 5-phosphate. It participates in carbohydrate degradation; pentose phosphate pathway; D-ribose 5-phosphate from D-ribulose 5-phosphate (non-oxidative stage): step 1/1. Catalyzes the reversible conversion of ribose-5-phosphate to ribulose 5-phosphate. This is Ribose-5-phosphate isomerase A from Streptococcus pneumoniae (strain ATCC 700669 / Spain 23F-1).